A 124-amino-acid polypeptide reads, in one-letter code: uncharacterized protein (124 aa).

The protein resides in the cytoplasm. It is found in the nucleus. This is an uncharacterized protein from Schizosaccharomyces pombe (strain 972 / ATCC 24843) (Fission yeast).